A 132-amino-acid polypeptide reads, in one-letter code: Small ribosomal subunit protein uS8 (132 aa).

The protein belongs to the universal ribosomal protein uS8 family. In terms of assembly, part of the 30S ribosomal subunit. Contacts proteins S5 and S12.

Functionally, one of the primary rRNA binding proteins, it binds directly to 16S rRNA central domain where it helps coordinate assembly of the platform of the 30S subunit. The polypeptide is Small ribosomal subunit protein uS8 (Leptospira biflexa serovar Patoc (strain Patoc 1 / Ames)).